The chain runs to 291 residues: 4-diphosphocytidyl-2-C-methyl-D-erythritol kinase (291 aa).

The active site involves lysine 19. Proline 102–serine 112 contacts ATP. Aspartate 144 is an active-site residue.

It belongs to the GHMP kinase family. IspE subfamily.

It catalyses the reaction 4-CDP-2-C-methyl-D-erythritol + ATP = 4-CDP-2-C-methyl-D-erythritol 2-phosphate + ADP + H(+). It functions in the pathway isoprenoid biosynthesis; isopentenyl diphosphate biosynthesis via DXP pathway; isopentenyl diphosphate from 1-deoxy-D-xylulose 5-phosphate: step 3/6. Catalyzes the phosphorylation of the position 2 hydroxy group of 4-diphosphocytidyl-2C-methyl-D-erythritol. The polypeptide is 4-diphosphocytidyl-2-C-methyl-D-erythritol kinase (Ectopseudomonas mendocina (strain ymp) (Pseudomonas mendocina)).